Consider the following 349-residue polypeptide: MNLTNIPRQALPELLCRMPKAELHIHIEGSLEPELIFALAERNRLQLAYPTIESLRAAYAFTNLQSFLDIYYAGASVLQTEQDFFDMAWAYLLRAKADNVVHAEIFFDPQTHTARGIPFATIINGLDRAIQQGRNELGISAALILCFLRHLTEADAFTVLEEALPFRDKFIGVGLDSGEKGNPPEKFSRVFARCRELGLRLVAHAGEEGTAEYIWHALDLLQAERIDHGVHCLDDPQLVTRLVQQQVPLTVCPLSNVKLRVFPDLAAHNIARLLACGIRATINSDDPAYFGGYLNQNYLETFAALPELGAAEAYQLARNSFEASFVDAEVKAGWIRELDQFFQQQCDKI.

The Zn(2+) site is built by histidine 24, histidine 26, and histidine 204. Residue glutamate 207 is the Proton donor of the active site. Aspartate 285 provides a ligand contact to Zn(2+). Substrate is bound at residue aspartate 286.

Belongs to the metallo-dependent hydrolases superfamily. Adenosine and AMP deaminases family. Adenine deaminase type 2 subfamily. Zn(2+) serves as cofactor.

It catalyses the reaction adenine + H2O + H(+) = hypoxanthine + NH4(+). Catalyzes the hydrolytic deamination of adenine to hypoxanthine. Plays an important role in the purine salvage pathway and in nitrogen catabolism. The chain is Adenine deaminase from Trichlorobacter lovleyi (strain ATCC BAA-1151 / DSM 17278 / SZ) (Geobacter lovleyi).